Consider the following 2958-residue polypeptide: Protein CSF1 (2958 aa).

At 1–17 the chain is on the cytoplasmic side; sequence MEAISQLRGVPLTHQKD. Residues 18 to 38 form a helical; Signal-anchor for type II membrane protein membrane-spanning segment; the sequence is FSWVFLVDWILTVVVCLTMIF. At 39–2958 the chain is on the extracellular side; that stretch reads YMGRIYAYLV…QYVKILDDTH (2920 aa). N-linked (GlcNAc...) asparagine glycosylation is found at N82, N117, N144, N271, N478, N530, N816, N821, N839, and N892. Positions 813-834 are disordered; sequence GYQNSSLKNESEDKGPMKRSDL. The span at 821 to 834 shows a compositional bias: basic and acidic residues; it reads NESEDKGPMKRSDL. The tract at residues 1175–1196 is disordered; the sequence is MEPSRASFSEDDNDEEADPSSF. Acidic residues predominate over residues 1183–1192; that stretch reads SEDDNDEEAD. 13 N-linked (GlcNAc...) asparagine glycosylation sites follow: N1309, N1368, N1453, N1785, N1921, N2130, N2146, N2280, N2337, N2520, N2578, N2719, and N2869.

Belongs to the CSF1 family. Interacts with MCD4; CSF1 channels phosphatidylethanolamine to MCD4 in the endoplasmic reticulum at contact sites to support GPI anchor biosynthesis.

The protein localises to the cell membrane. It localises to the endoplasmic reticulum membrane. The protein resides in the mitochondrion membrane. In terms of biological role, tube-forming lipid transport protein which provides phosphatidylethanolamine for glycosylphosphatidylinositol (GPI) anchor synthesis in the endoplasmic reticulum. Required for the glucose and other nutrients uptake at low temperature. The polypeptide is Protein CSF1 (Saccharomyces cerevisiae (strain ATCC 204508 / S288c) (Baker's yeast)).